Consider the following 105-residue polypeptide: UPF0235 protein CT1832 (105 aa).

Belongs to the UPF0235 family.

The protein is UPF0235 protein CT1832 of Chlorobaculum tepidum (strain ATCC 49652 / DSM 12025 / NBRC 103806 / TLS) (Chlorobium tepidum).